The primary structure comprises 235 residues: Small ribosomal subunit protein uS2c (235 aa).

This sequence belongs to the universal ribosomal protein uS2 family.

The protein resides in the plastid. It localises to the chloroplast. In Huperzia lucidula (Shining clubmoss), this protein is Small ribosomal subunit protein uS2c (rps2).